Consider the following 677-residue polypeptide: UvrABC system protein B (677 aa).

One can recognise a Helicase ATP-binding domain in the interval 31-417 (DRIESGETDI…SDGVVEQIIR (387 aa)). 44–51 (GATGTGKS) serves as a coordination point for ATP. Positions 97–120 (YYDYYQPEAYVPKTDTFIEKDASV) match the Beta-hairpin motif. Positions 434 to 596 (QIDDLLEEIR…VTPVPIKKTV (163 aa)) constitute a Helicase C-terminal domain. Residues 629–664 (KSHIKSLEAKMYMAAESLMFEEAAELRDEIQSLKEK) enclose the UVR domain.

This sequence belongs to the UvrB family. Forms a heterotetramer with UvrA during the search for lesions. Interacts with UvrC in an incision complex.

It is found in the cytoplasm. Its function is as follows. The UvrABC repair system catalyzes the recognition and processing of DNA lesions. A damage recognition complex composed of 2 UvrA and 2 UvrB subunits scans DNA for abnormalities. Upon binding of the UvrA(2)B(2) complex to a putative damaged site, the DNA wraps around one UvrB monomer. DNA wrap is dependent on ATP binding by UvrB and probably causes local melting of the DNA helix, facilitating insertion of UvrB beta-hairpin between the DNA strands. Then UvrB probes one DNA strand for the presence of a lesion. If a lesion is found the UvrA subunits dissociate and the UvrB-DNA preincision complex is formed. This complex is subsequently bound by UvrC and the second UvrB is released. If no lesion is found, the DNA wraps around the other UvrB subunit that will check the other stand for damage. This is UvrABC system protein B from Tropheryma whipplei (strain TW08/27) (Whipple's bacillus).